The primary structure comprises 938 residues: Chaperone protein ClpD1, chloroplastic (938 aa).

The N-terminal 83 residues, 1–83, are a transit peptide targeting the chloroplast; that stretch reads MEVCCCSTSS…FERFTERAVK (83 aa). Repeat regions lie at residues 84-145 and 159-224; these read AVVL…TPGA and FSGS…LQAE. The 141-residue stretch at 84–224 folds into the Clp R domain; sequence AVVLSQREAK…SVALTRLQAE (141 aa). The interval 234–255 is disordered; it reads GASSFKVPKKSPAGAGRSAFSK. The segment at 266–519 is i; the sequence is LDQFCLDLTT…RMESFNRKKE (254 aa). ATP contacts are provided by residues 311-318 and 660-667; these read GEAGVGKT and GPTGVGKT. An II region spans residues 586–777; it reads VGTEEIARVA…LIVMTSNIGS (192 aa).

It belongs to the ClpA/ClpB family. ClpD subfamily. Expressed in stems, culms and leaves.

It localises to the plastid. The protein localises to the chloroplast. In terms of biological role, molecular chaperone that may function in heat stress response. May interact with a ClpP-like protease involved in degradation of denatured proteins in the chloroplast. Chaperone involved in response to abiotic stresses. Plays a positive role during dehydration and salt stress. This is Chaperone protein ClpD1, chloroplastic from Oryza sativa subsp. japonica (Rice).